The following is a 630-amino-acid chain: Putative F-box/LRR-repeat protein At3g49150 (630 aa).

The region spanning 15–63 (KDIISDLPEALICHILSFLPIEDSALTSVLSKKWQHLFAFRPNLEFDDA) is the F-box domain. LRR repeat units lie at residues 101-129 (CRDF…DLRC), 152-178 (RIET…YLNK), 180-205 (LLRH…FIMN), 228-253 (CEDV…VYHD), 300-325 (ISNV…QIPV), 337-362 (DQKA…IFDG), 406-436 (CDDY…KLFY), 437-465 (DTQI…FNAR), and 567-590 (DSSI…GLNW).

This chain is Putative F-box/LRR-repeat protein At3g49150, found in Arabidopsis thaliana (Mouse-ear cress).